The following is a 610-amino-acid chain: MTTAAIRGLQGEAPTKNKELLNWIADAVELFQPEAVVFVDGSQAEWDRMAEDLVEAGTLIKLNEEKRPNSYLARSNPSDVARVESRTFICSEKEEDAGPTNNWAPPQAMKDEMSKHYAGSMKGRTMYVVPFCMGPISDPDPKLGVQLTDSEYVVMSMRIMTRMGIEALDKIGANGSFVKCLHSVGAPLEPGQEDVAWPCNDTKYITQFPETKEIWSYGSGYGGNAILAKKCYALRIASVMAREEGWMAEHMLILKLINPEGKAYHIAAAFPSACGKTNLAMITPTIPGWTAQVVGDDIAWLKLREDGLYAVNPENGFFGVAPGTNYASNPIAMKTMEPGNTLFTNVALTDDGDIWWEGMDGDAPAHLIDWKGNDWTPESDENAAHPNSRYCVAIDQSPAAAPEFNDWEGVKIDAILFGGRRADTVPLVTQTYDWEHGTMVGALLASGQTAASAEAKVGTLRHDPMAMLPFIGYNAGEYLQNWIDMGNKGGDKMPSIFLVNWFRRGEDGRFLWPGFGDNSRVLKWVIDRIEGRVGADETVVGHTAKAEDLDLDGLDTPIEDVKEALTAPAEQWANDVQDNAEYLTFLGPRVPAEVHSQFDALKARISAAHA.

Substrate-binding positions include Arg82 and 221–223 (YGG). Mn(2+)-binding residues include Lys230 and His250. Ser272 provides a ligand contact to substrate. Position 273-278 (273-278 (ACGKTN)) interacts with GTP. Residue Cys274 is part of the active site. Position 297 (Asp297) interacts with Mn(2+). 387–389 (NSR) contributes to the substrate binding site. GTP contacts are provided by residues Arg389, Arg420, and 515 to 518 (FGDN).

This sequence belongs to the phosphoenolpyruvate carboxykinase [GTP] family. As to quaternary structure, monomer. Mn(2+) is required as a cofactor.

The protein resides in the cytoplasm. The enzyme catalyses oxaloacetate + GTP = phosphoenolpyruvate + GDP + CO2. It participates in carbohydrate biosynthesis; gluconeogenesis. Its function is as follows. Catalyzes the conversion of oxaloacetate (OAA) to phosphoenolpyruvate (PEP), the rate-limiting step in the metabolic pathway that produces glucose from lactate and other precursors derived from the citric acid cycle. This is Phosphoenolpyruvate carboxykinase [GTP] from Corynebacterium glutamicum (strain R).